Reading from the N-terminus, the 187-residue chain is Alpha-D-galactose-binding lectin (187 aa).

The N-terminal stretch at 1–37 is a signal peptide; that stretch reads MTFAKQSCFNSIILLSIATSYFKIGHKISELGNRIEK. The residue at position 39 (Thr39) is an N-acetylthreonine. N-acetyl-alpha-D-galactosamine contacts are provided by residues 53–56, Asp64, 72–76, His101, Gly104, Glu112, 120–122, His145, Gly148, Glu156, and 164–166; these read HPKG, DIHER, DRH, and DKH.

Homodimer. In terms of tissue distribution, highest expression in the posterior part of the mantle. Highly expressed in gills and to a lesser extent in mid mantle and anterior muscle. Lowest expression in digestive gland and posterior adductor muscle. Scarcely detectable in hemocytes.

With respect to regulation, agglutination of E.coli is inhibited by alpha-galactoside melibiose, but not by beta-galactoside lactose. In terms of biological role, alpha-D-galactose-binding lectin. Binds D-GalNAc, but not glucose or its derivatives. Has hemagglutinating activity towards rabbit erythrocytes. Agglutinates bacteria. Has bacteriostatic activity on both Gram-positive and Gram-negative bacteria including B.subtilis, S.aureus, E.coli and V.parahaemolyticus, respectively. Has a dose-dependent cytotoxic effect on the human globotriaosylceramide (Gb3)-expressing Epstein-Barr virus (EBV)-positive Burkitt's lymphoma (Raji) cell line. Has dose-dependent cytotoxic effect on another Burkitt's lymphoma (Ramos) cell line, which does not possess the EBV genome, but also expresses Gb3. Binds to Gb3 in these cells leading to phosphorylation of MEK1/2, ERK1/2, JNK and p38 kinase, activation of caspase-9/3 and to expression of p21 and tumor necrosis factor (TNF)-alpha. No cytotoxic effect on the human chronic myelogenous leukemia (K-562) cell line, which does not express Gb3. May be involved in innate immunity acting as an antibacterial or antifungal agent. May be a pattern recognition receptor (PRR) involved in recognition of glycans found on parasitic or symbiotic microorganisms. This Mytilus galloprovincialis (Mediterranean mussel) protein is Alpha-D-galactose-binding lectin.